The chain runs to 177 residues: Large ribosomal subunit protein uL10 (177 aa).

The protein belongs to the universal ribosomal protein uL10 family. Part of the ribosomal stalk of the 50S ribosomal subunit. The N-terminus interacts with L11 and the large rRNA to form the base of the stalk. The C-terminus forms an elongated spine to which L12 dimers bind in a sequential fashion forming a multimeric L10(L12)X complex.

In terms of biological role, forms part of the ribosomal stalk, playing a central role in the interaction of the ribosome with GTP-bound translation factors. This Thermoanaerobacter sp. (strain X514) protein is Large ribosomal subunit protein uL10.